The primary structure comprises 299 residues: Ribosomal RNA small subunit methyltransferase H (299 aa).

Residues 45 to 47 (GGH), Asp-64, Phe-92, Asp-108, and Gln-115 each bind S-adenosyl-L-methionine. Positions 275 to 299 (PQSDEQAKNPRSRSAKLRLAQRKEQ) are disordered. Residues 284 to 299 (PRSRSAKLRLAQRKEQ) are compositionally biased toward basic residues.

It belongs to the methyltransferase superfamily. RsmH family.

The protein resides in the cytoplasm. It carries out the reaction cytidine(1402) in 16S rRNA + S-adenosyl-L-methionine = N(4)-methylcytidine(1402) in 16S rRNA + S-adenosyl-L-homocysteine + H(+). Specifically methylates the N4 position of cytidine in position 1402 (C1402) of 16S rRNA. In Gloeothece citriformis (strain PCC 7424) (Cyanothece sp. (strain PCC 7424)), this protein is Ribosomal RNA small subunit methyltransferase H.